The following is a 392-amino-acid chain: Protein O-glucosyltransferase 1 (392 aa).

Positions 1–23 are cleaved as a signal peptide; sequence MERRAGSRLRAWMLLLLLCPVQG. 4 disulfide bridges follow: Cys-49-Cys-56, Cys-54-Cys-357, Cys-102-Cys-108, and Cys-263-Cys-286. The N-linked (GlcNAc...) asparagine glycan is linked to Asn-53. Positions 103–107 are interaction with the consensus sequence C-X-S-X-[PA]-C in peptide substrates; the sequence is MFPSR. Residue Asp-133 is the Proton donor/acceptor of the active site. An interaction with the consensus sequence C-X-S-X-[PA]-C in peptide substrates region spans residues 172–178; it reads AVWPLYP. Residue Tyr-177 coordinates UDP-alpha-D-glucose. Asn-204 carries an N-linked (GlcNAc...) asparagine glycan. UDP-alpha-D-glucose-binding positions include Ser-212, Arg-218, and 274 to 279; that span reads VAASFR. The N-linked (GlcNAc...) asparagine glycan is linked to Asn-373. The Prevents secretion from ER signature appears at 389–392; that stretch reads KTEL.

The protein belongs to the glycosyltransferase 90 family. Widely expressed in newborn and adult tissues (at protein level).

The protein localises to the endoplasmic reticulum lumen. It catalyses the reaction L-seryl-[EGF-like domain protein] + UDP-alpha-D-xylose = 3-O-(beta-D-xylosyl)-L-seryl-[EGF-like domain protein] + UDP + H(+). The enzyme catalyses L-seryl-[EGF-like domain protein] + UDP-alpha-D-glucose = 3-O-(beta-D-glucosyl)-L-seryl-[EGF-like domain protein] + UDP + H(+). It participates in protein modification; protein glycosylation. In terms of biological role, dual specificity glycosyltransferase that catalyzes the transfer of glucose and xylose from UDP-glucose and UDP-xylose, respectively, to a serine residue found in the consensus sequence of C-X-S-X-P-C. Specifically targets extracellular EGF repeats of protein such as CRB2, F7, F9 and NOTCH2. Acts as a positive regulator of Notch signaling by mediating O-glucosylation of Notch, leading to regulate muscle development. Notch glucosylation does not affect Notch ligand binding. Required during early development to promote gastrulation: acts by mediating O-glucosylation of CRB2, which is required for CRB2 localization to the cell membrane. The chain is Protein O-glucosyltransferase 1 from Mus musculus (Mouse).